The primary structure comprises 1687 residues: PH domain leucine-rich repeat-containing protein phosphatase 1 (1687 aa).

M1 is subject to N-acetylmethionine. Disordered stretches follow at residues 1-96 and 230-406; these read MEPA…GGGA and AAAP…AAPD. Residues 78-96 are compositionally biased toward low complexity; it reads APQPAAGGAAPVPAAGGGA. S286 carries the phosphoserine modification. Polar residues predominate over residues 314–326; that stretch reads DTESFSLSPSAES. S372 is modified (phosphoserine). The 101-residue stretch at 492-592 folds into the PH domain; it reads RIQLSGMYNV…WLRQVSKVAS (101 aa). 21 LRR repeats span residues 594–615, 617–638, 648–669, 671–692, 694–715, 717–739, 740–760, 764–785, 788–809, 829–850, 851–872, 874–895, 897–918, 919–940, 943–964, 969–989, 993–1014, 1017–1038, 1040–1061, 1062–1083, and 1085–1106; these read RISS…LFYS, DLTH…PAAR, KLKS…VCSI, TLAE…VGDM, NLQT…LESM, QLSY…EKLT, AVDK…QALR, HIKH…EVDF, HVTQ…IFNN, FLKA…PVPN, YLSY…VCES, KLEV…LFCN, SLRK…LERT, SVEV…LLMK, SLRF…TLSE, ILQE…PLLT, RLKI…KMAK, ELEE…IMNC, RMHT…MQLP, EVKC…ENLP, and KLQE…SLEL. The 248-residue stretch at 1131-1378 folds into the PPM-type phosphatase domain; it reads SHGYTEASGV…DSISAVVVQL (248 aa). D1166, G1167, K1330, and D1369 together coordinate Mn(2+). Disordered regions lie at residues 1414-1465 and 1604-1687; these read DRPS…SSPA and PGGY…DTPL. Residues 1424–1445 show a composition bias toward low complexity; sequence SSSSGMASEISSELSTSEMSSE. The span at 1649-1669 shows a compositional bias: pro residues; it reads LPPPPQPPQPQPQPQPQPQPQ. Positions 1685-1687 match the PDZ-binding motif; it reads TPL.

Interacts with the nucleotide free form of K-Ras (KRAS) via its LRR repeats. Interacts with AKT2, AKT3 and PRKCB. Interacts with WDR48 and USP12. Mn(2+) is required as a cofactor. As to expression, isoforms 1 and 2 are expressed in the retina.

It is found in the cytoplasm. Its subcellular location is the membrane. The protein localises to the nucleus. The catalysed reaction is O-phospho-L-seryl-[protein] + H2O = L-seryl-[protein] + phosphate. It carries out the reaction O-phospho-L-threonyl-[protein] + H2O = L-threonyl-[protein] + phosphate. With respect to regulation, insensitive to okadaic acid. Deubiquitination by WDR48-USP12 complex positively regulates PHLPP1 stability. Protein phosphatase involved in regulation of Akt and PKC signaling. Mediates dephosphorylation in the C-terminal domain hydrophobic motif of members of the AGC Ser/Thr protein kinase family; specifically acts on 'Ser-473' of AKT2 and AKT3, 'Ser-660' of PRKCB and 'Ser-657' of PRKCA. Isoform 2 seems to have a major role in regulating Akt signaling in hippocampal neurons. Akt regulates the balance between cell survival and apoptosis through a cascade that primarily alters the function of transcription factors that regulate pro- and antiapoptotic genes. Dephosphorylation of 'Ser-473' of Akt triggers apoptosis and suppression of tumor growth. Dephosphorylation of PRKCA and PRKCB leads to their destabilization and degradation. Dephosphorylates STK4 on 'Thr-387' leading to STK4 activation and apoptosis. Dephosphorylates RPS6KB1 and is involved in regulation of cap-dependent translation. Inhibits cancer cell proliferation and may act as a tumor suppressor. Dephosphorylates RAF1 inhibiting its kinase activity. May act as a negative regulator of K-Ras signaling in membrane rafts. Involved in the hippocampus-dependent long-term memory formation. Involved in circadian control by regulating the consolidation of circadian periodicity after resetting. Involved in development and function of regulatory T-cells. This chain is PH domain leucine-rich repeat-containing protein phosphatase 1 (Phlpp1), found in Mus musculus (Mouse).